A 373-amino-acid polypeptide reads, in one-letter code: 3 beta-hydroxysteroid dehydrogenase/Delta 5--&gt;4-isomerase type 1 (373 aa).

NADP(+) is bound by residues 10–15, Y155, and K159; that span reads GAGGFV. K159 acts as the Proton donor in catalysis. Residues 288–308 traverse the membrane as a helical segment; the sequence is LPLLYWLAFLLETVSFLLRPV.

It belongs to the 3-beta-HSD family. Steroidogenic tissues (includes testes, ovaries and adrenal glands).

The protein localises to the endoplasmic reticulum membrane. It localises to the mitochondrion membrane. It carries out the reaction a 3beta-hydroxy-Delta(5)-steroid + NAD(+) = a 3-oxo-Delta(5)-steroid + NADH + H(+). It catalyses the reaction pregnenolone + NAD(+) = pregn-5-ene-3,20-dione + NADH + H(+). The enzyme catalyses 3beta-hydroxyandrost-5-en-17-one + NAD(+) = androst-5-ene-3,17-dione + NADH + H(+). The catalysed reaction is androst-5-en-3beta,17beta-diol + NAD(+) = 17beta-hydroxy-androst-5-en-3-one + NADH + H(+). It carries out the reaction a 3beta-hydroxysteroid + NADP(+) = a 3-oxosteroid + NADPH + H(+). It catalyses the reaction 5alpha-androstane-3beta,17beta-diol + NADP(+) = 17beta-hydroxy-5alpha-androstan-3-one + NADPH + H(+). The enzyme catalyses 3beta-hydroxy-5alpha-androstan-17-one + NADP(+) = 5alpha-androstan-3,17-dione + NADPH + H(+). The catalysed reaction is a 3-oxo-Delta(5)-steroid = a 3-oxo-Delta(4)-steroid. It carries out the reaction pregn-5-ene-3,20-dione = progesterone. It catalyses the reaction androst-5-ene-3,17-dione = androst-4-ene-3,17-dione. The enzyme catalyses 17beta-hydroxy-androst-5-en-3-one = testosterone. The catalysed reaction is 5alpha-androstane-3beta,17beta-diol + NAD(+) = 17beta-hydroxy-5alpha-androstan-3-one + NADH + H(+). The protein operates within steroid hormone biosynthesis. It participates in steroid metabolism. Its function is as follows. A bifunctional enzyme responsible for the oxidation and isomerization of 3beta-hydroxy-Delta(5)-steroid precursors to 3-oxo-Delta(4)-steroids, an essential step in steroid hormone biosynthesis. Specifically catalyzes the conversion of pregnenolone to progesterone, 17alpha-hydroxypregnenolone to 17alpha-hydroxyprogesterone, dehydroepiandrosterone (DHEA) to 4-androstenedione, and androstenediol to testosterone. Additionally, catalyzes the interconversion between 3beta-hydroxy and 3-oxo-5alpha-androstane steroids controlling the bioavalability of the active forms. Specifically converts dihydrotestosterone to its inactive form 5alpha-androstanediol, that does not bind androgen receptor/AR. Also converts androstanedione, a precursor of testosterone and estrone, to epiandrosterone. Expected to use NAD(+) as preferred electron donor for the 3-beta-hydroxy-steroid dehydrogenase activity and NADPH for the 3-ketosteroid reductase activity. The sequence is that of 3 beta-hydroxysteroid dehydrogenase/Delta 5--&gt;4-isomerase type 1 from Mus musculus (Mouse).